The following is a 431-amino-acid chain: MYIKLDIQTEFEVKSLSDLPNFKKLMGNLKMKINKSQLARELNVDRRTIDKYLNGFTPKGTKNKTSKIDTYYEVIAALLSSDSKQIFYYKRVLWQYLTDNHGLKCSQSAFRAYINRKPEFRTYFDEGKRILSGHSVGVRYETPPGEQAQLDWKESIRFETKSGEIVYVNVAVLLLSYSRFKVFHLNISKSQSVLMSFMTEAFEMFGGVPKVIVTDNMKTVMDEARTEHFTGTINNKFAQFAQDFGFKVQPCIAGRPNTKGKVEAPMKLLDEIHTYQGRFTFEELHEFVQKLCARINQTFHQGTGKIPVFALKQEKNLLQPLPKSAIRDSYMIKHKLVKVNTSGMISYKSNQYSVPAEYQGKTVGLQVYDNQIYVYHNMKLIVQHKISQSKLNYKEEHYKKALAKSLPKYPNIDNLAKQNLSVIGEVYRNEE.

Residues 20-79 form the HTH IS21-type domain; the sequence is PNFKKLMGNLKMKINKSQLARELNVDRRTIDKYLNGFTPKGTKNKTSKIDTYYEVIAALL. Residues 35–54 constitute a DNA-binding region (H-T-H motif); it reads KSQLARELNVDRRTIDKYLN. Positions 140-315 constitute an Integrase catalytic domain; the sequence is YETPPGEQAQ…IPVFALKQEK (176 aa).

The protein belongs to the transposase IS21/IS408/IS1162 family.

Functionally, involved in the transposition of the insertion sequence. The sequence is that of Transposase for insertion sequence element IS232 from Bacillus thuringiensis subsp. berliner.